Here is a 327-residue protein sequence, read N- to C-terminus: Phenylalanine--tRNA ligase alpha subunit (327 aa).

Mg(2+) is bound at residue Glu-252.

The protein belongs to the class-II aminoacyl-tRNA synthetase family. Phe-tRNA synthetase alpha subunit type 1 subfamily. As to quaternary structure, tetramer of two alpha and two beta subunits. Requires Mg(2+) as cofactor.

It localises to the cytoplasm. The enzyme catalyses tRNA(Phe) + L-phenylalanine + ATP = L-phenylalanyl-tRNA(Phe) + AMP + diphosphate + H(+). This is Phenylalanine--tRNA ligase alpha subunit from Shigella flexneri.